Reading from the N-terminus, the 306-residue chain is MNARHFLSMMDYTPDELLGLIRRGVELKDLRNRGVLFEPLKNRVLGMIFEKSSTRTRLSFEAGMIQLGGQAIFLSHRDTQLGRGEPIADSAKVISRMLDAVMIRTYAHDNLTEFAANSRVPVINGLSDDLHPCQLLADMQTFLEHRGSIKGKTVAWIGDGNNMCNSYIEAAIQFDFQLRVACPAGYEPNPEFLALAGERVTVVRDPKAAVAGAHLVSTDVWTSMGQEEETARRKALFAPFQVTRALLDLADKDVLFMHCLPAHRGEEISVDLLDDARSVAWDQAENRLHAQKALLEFLVAPCFQPA.

Residues 53–56 (STRT), glutamine 80, arginine 104, and 131–134 (HPCQ) contribute to the carbamoyl phosphate site. L-ornithine is bound by residues asparagine 162, aspartate 219, and 223 to 224 (SM). Residues 259–260 (CL) and arginine 287 contribute to the carbamoyl phosphate site.

It belongs to the aspartate/ornithine carbamoyltransferase superfamily. OTCase family.

It is found in the cytoplasm. It catalyses the reaction carbamoyl phosphate + L-ornithine = L-citrulline + phosphate + H(+). It participates in amino-acid biosynthesis; L-arginine biosynthesis; L-arginine from L-ornithine and carbamoyl phosphate: step 1/3. Reversibly catalyzes the transfer of the carbamoyl group from carbamoyl phosphate (CP) to the N(epsilon) atom of ornithine (ORN) to produce L-citrulline. This chain is Ornithine carbamoyltransferase, found in Pseudomonas syringae pv. tomato (strain ATCC BAA-871 / DC3000).